Consider the following 170-residue polypeptide: Translocator protein 2 (170 aa).

Transmembrane regions (helical) follow at residues 3-23 (LQGA…WLFT), 45-65 (VLLL…YLVW), 78-98 (LPLG…VLFF), 104-124 (GLAL…ALIW), and 130-150 (LAAL…ALTY).

The protein belongs to the TspO/BZRP family. Homotetramer. May also form homodimer. As to expression, expressed in erythrocytes (at protein level).

The protein localises to the endoplasmic reticulum membrane. It is found in the cell membrane. Its function is as follows. Cholesterol-binding protein involved in the redistribution of cholesterol from lipid droplets to the endoplasmic reticulum. Required to meet cholesterol demands during erythropoietic differentiation. May play a role in transport processes at the plasma membrane of erythrocytes, including regulating VDAC-mediated ATP export, and import of the heme precursors protoporphyrin IX and 5-aminolevulinic acid. This is Translocator protein 2 (TSPO2) from Homo sapiens (Human).